We begin with the raw amino-acid sequence, 241 residues long: Major prion protein (241 aa).

The signal sequence occupies residues 1-15; that stretch reads MLVLFVATWSDLGLC. An interaction with ADGRG6 region spans residues 16–31; the sequence is KKRPKPGGWNTGGSRY. The segment at 16-223 is interaction with GRB2, ERI3 and SYN1; it reads KKRPKPGGWN…ESQAYYQRGS (208 aa). Positions 18–101 are disordered; sequence RPKPGGWNTG…WHKPNKPKTS (84 aa). 5 tandem repeats follow at residues 44-52, 53-60, 61-68, 69-76, and 77-84. The 5 X 8 AA tandem repeats of P-H-G-G-G-W-G-Q stretch occupies residues 44-84; sequence PQGGGGWGQPHGGGWGQPHGGGWGQPHGGGWGQPHGGGWGQ. Over residues 45–88 the composition is skewed to gly residues; that stretch reads QGGGGWGQPHGGGWGQPHGGGWGQPHGGGWGQPHGGGWGQGGGT. Cu(2+) is bound by residues histidine 54, glycine 55, glycine 56, histidine 62, glycine 63, glycine 64, histidine 70, glycine 71, glycine 72, histidine 78, glycine 79, and glycine 80. Over residues 91–101 the composition is skewed to basic residues; the sequence is QWHKPNKPKTS. The cysteines at positions 172 and 207 are disulfide-linked. Asparagine 174 and asparagine 190 each carry an N-linked (GlcNAc...) asparagine glycan. Serine 223 is lipidated: GPI-anchor amidated serine. A propeptide spans 224–241 (removed in mature form); it reads SMVLFSSPPVILLISFLI.

This sequence belongs to the prion family. Monomer and homodimer. Has a tendency to aggregate into amyloid fibrils containing a cross-beta spine, formed by a steric zipper of superposed beta-strands. Soluble oligomers may represent an intermediate stage on the path to fibril formation. Copper binding may promote oligomerization. Interacts with GRB2, APP, ERI3/PRNPIP and SYN1. Mislocalized cytosolically exposed PrP interacts with MGRN1; this interaction alters MGRN1 subcellular location and causes lysosomal enlargement. Interacts with APP. Interacts with KIAA1191. Interacts with ADGRG6.

It is found in the cell membrane. The protein localises to the golgi apparatus. In terms of biological role, its primary physiological function is unclear. May play a role in neuronal development and synaptic plasticity. May be required for neuronal myelin sheath maintenance. May promote myelin homeostasis through acting as an agonist for ADGRG6 receptor. May play a role in iron uptake and iron homeostasis. Soluble oligomers are toxic to cultured neuroblastoma cells and induce apoptosis (in vitro). Association with GPC1 (via its heparan sulfate chains) targets PRNP to lipid rafts. Also provides Cu(2+) or Zn(2+) for the ascorbate-mediated GPC1 deaminase degradation of its heparan sulfate side chains. The sequence is that of Major prion protein (PRNP) from Mandrillus sphinx (Mandrill).